The primary structure comprises 610 residues: Phosphoenolpyruvate carboxykinase [GTP] (610 aa).

Substrate contacts are provided by residues R82 and 221–223 (YGG). Positions 230 and 250 each coordinate Mn(2+). Residue S272 participates in substrate binding. GTP is bound at residue 273-278 (ACGKTN). Residue C274 is part of the active site. Position 297 (D297) interacts with Mn(2+). 387-389 (NSR) provides a ligand contact to substrate. GTP is bound by residues R389, R420, and 515-518 (FGDN).

The protein belongs to the phosphoenolpyruvate carboxykinase [GTP] family. As to quaternary structure, monomer. The cofactor is Mn(2+).

It is found in the cytoplasm. It catalyses the reaction oxaloacetate + GTP = phosphoenolpyruvate + GDP + CO2. Its pathway is carbohydrate biosynthesis; gluconeogenesis. Involved in the gluconeogenesis. Catalyzes the conversion of oxaloacetate (OAA) to phosphoenolpyruvate (PEP), the rate-limiting step in the metabolic pathway that produces glucose from lactate and other precursors derived from the citric acid cycle. This is Phosphoenolpyruvate carboxykinase [GTP] from Corynebacterium glutamicum (strain ATCC 13032 / DSM 20300 / JCM 1318 / BCRC 11384 / CCUG 27702 / LMG 3730 / NBRC 12168 / NCIMB 10025 / NRRL B-2784 / 534).